The primary structure comprises 392 residues: GTPase Obg (392 aa).

In terms of domain architecture, Obg spans 1–159 (MKFVDEAEIR…RNLKLELMLL (159 aa)). The disordered stretch occupies residues 121–146 (GFHGLGNTRFKSSTNRAPRQKTNGTP). Residues 129 to 145 (RFKSSTNRAPRQKTNGT) show a composition bias toward polar residues. The OBG-type G domain maps to 160 to 333 (ADVGLLGMPN…LCNDVMDFIE (174 aa)). Residues 166 to 173 (GMPNAGKS), 191 to 195 (FTTLV), 213 to 216 (DIPG), 283 to 286 (NKVD), and 314 to 316 (SAF) contribute to the GTP site. Mg(2+) contacts are provided by Ser-173 and Thr-193.

Belongs to the TRAFAC class OBG-HflX-like GTPase superfamily. OBG GTPase family. As to quaternary structure, monomer. The cofactor is Mg(2+).

It localises to the cytoplasm. An essential GTPase which binds GTP, GDP and possibly (p)ppGpp with moderate affinity, with high nucleotide exchange rates and a fairly low GTP hydrolysis rate. Plays a role in control of the cell cycle, stress response, ribosome biogenesis and in those bacteria that undergo differentiation, in morphogenesis control. This is GTPase Obg from Alteromonas mediterranea (strain DSM 17117 / CIP 110805 / LMG 28347 / Deep ecotype).